The chain runs to 491 residues: UDP-N-acetylmuramate--L-alanine ligase (491 aa).

126 to 132 (GTHGKTT) contributes to the ATP binding site.

This sequence belongs to the MurCDEF family.

The protein resides in the cytoplasm. It carries out the reaction UDP-N-acetyl-alpha-D-muramate + L-alanine + ATP = UDP-N-acetyl-alpha-D-muramoyl-L-alanine + ADP + phosphate + H(+). It functions in the pathway cell wall biogenesis; peptidoglycan biosynthesis. Cell wall formation. The sequence is that of UDP-N-acetylmuramate--L-alanine ligase from Salmonella choleraesuis (strain SC-B67).